Here is a 315-residue protein sequence, read N- to C-terminus: Homocysteine S-methyltransferase YbgG (315 aa).

Positions 2 to 309 (NPIQHILDTY…ENIQEIAAWA (308 aa)) constitute a Hcy-binding domain. Zn(2+) is bound by residues C229, C294, and C295.

The cofactor is Zn(2+).

It carries out the reaction S-methyl-L-methionine + L-homocysteine = 2 L-methionine + H(+). The sequence is that of Homocysteine S-methyltransferase YbgG (ybgG) from Bacillus subtilis (strain 168).